A 170-amino-acid chain; its full sequence is APRG1 tumor suppressor candidate (170 aa).

The chain crosses the membrane as a helical span at residues 150 to 170; that stretch reads IALALAGPGAILILELSWFLG.

As to expression, expressed at high levels in the pancreas and placenta. Expressed at high levels in the kidney.

The protein resides in the membrane. In Homo sapiens (Human), this protein is APRG1 tumor suppressor candidate.